Reading from the N-terminus, the 143-residue chain is Hemoglobin subunit alpha (143 aa).

Residues 2-143 (TLSDKDKSTV…VALALAERYR (142 aa)) form the Globin domain. Histidine 60 serves as a coordination point for O2. Histidine 89 contributes to the heme b binding site.

It belongs to the globin family. As to quaternary structure, heterotetramer of two alpha chains and two beta chains. Red blood cells.

Functionally, involved in oxygen transport from gills to the various peripheral tissues. The sequence is that of Hemoglobin subunit alpha (hba) from Thunnus thynnus (Atlantic bluefin tuna).